A 243-amino-acid chain; its full sequence is Zinc import ATP-binding protein ZnuC (243 aa).

An ABC transporter domain is found at 4–219 (IAAHHLAVRR…PEYRALFGHG (216 aa)). 36–43 (GPNGSGKS) is an ATP binding site.

This sequence belongs to the ABC transporter superfamily. Zinc importer (TC 3.A.1.15.5) family. As to quaternary structure, the complex is composed of two ATP-binding proteins (ZnuC), two transmembrane proteins (ZnuB) and a solute-binding protein (ZnuA).

Its subcellular location is the cell inner membrane. It catalyses the reaction Zn(2+)(out) + ATP(in) + H2O(in) = Zn(2+)(in) + ADP(in) + phosphate(in) + H(+)(in). Part of the ABC transporter complex ZnuABC involved in zinc import. Responsible for energy coupling to the transport system. The protein is Zinc import ATP-binding protein ZnuC of Cereibacter sphaeroides (strain ATCC 17023 / DSM 158 / JCM 6121 / CCUG 31486 / LMG 2827 / NBRC 12203 / NCIMB 8253 / ATH 2.4.1.) (Rhodobacter sphaeroides).